The primary structure comprises 910 residues: p53-induced death domain-containing protein 1 (910 aa).

Residues 1-25 form a disordered region; that stretch reads MAATVEGPELEAAAAAGDASEDSDA. Alanine 2 carries the N-acetylalanine modification. 7 LRR repeats span residues 126–147, 149–171, 172–194, 195–216, 218–240, 241–263, and 264–285; these read HLAH…VLQM, GLGA…GALP, ALTF…GALS, TLQR…IGGL, SLLE…AGLR, SLRL…ARLP, and LLTR…LLDA. Residues serine 299 and serine 305 each carry the phosphoserine modification. ZU5 domains are found at residues 322–454 and 455–596; these read DLDS…VSRP and VSNA…WYTT. 2 peptidase S68 regions span residues 423–452 and 566–594; these read DLET…LVVS and DITA…WLWY. Catalysis depends on residues histidine 444, serine 446, histidine 586, and serine 588. A UPA domain region spans residues 580 to 716; the sequence is ARFQVTHFSW…TTTLDREAQA (137 aa). A Death domain is found at 788–873; that stretch reads TQSNLLSVAG…DVAEEVRAVL (86 aa). The disordered stretch occupies residues 884 to 910; it reads IRRMGLAPKDPALPGSSAPQPPEPAQA.

Forms a complex named the PIDDosome with CASP2 and CRADD. Forms a complex with IKBKG and RIPK1. Interacts with FADD and MADD. In terms of processing, undergoes autoproteolytic processing whose extent either directs cells towards survival or apoptotic pathways. Autoproteolytically cleaved into two main fragments PIDD-N and PIDD-C. PIDD-C can be further processed into PIDD-CC, a processing which is enhanced by DNA damage. The cleavage producing PIDD-C is required for translocation of PIDD1 to the nucleus upon DNA damage and activation of NF-kappa-B. PIDD-CC mediates the interaction with CRADD and the cleavage producing PIDD-CC is required for the activation of CASP2. PIDD-N remains associated with PIDD-C and PIDD-CC after cleavage. In terms of tissue distribution, ubiquitous.

The protein resides in the cytoplasm. Its subcellular location is the nucleus. Functionally, component of the DNA damage/stress response pathway that functions downstream of p53/TP53 and can either promote cell survival or apoptosis. Associated with CRADD and the CASP2 caspase, it forms the PIDDosome a complex that activates CASP2 and triggers apoptosis. Associated with IKBKG and RIPK1, it enhances sumoylation and ubiquitination of IKBKG which is important for activation of the transcription factor NF-kappa-B. The sequence is that of p53-induced death domain-containing protein 1 from Homo sapiens (Human).